Here is a 370-residue protein sequence, read N- to C-terminus: Erythronate-4-phosphate dehydrogenase (370 aa).

2 residues coordinate substrate: serine 45 and threonine 66. Residues aspartate 142 and threonine 169 each coordinate NAD(+). The active site involves arginine 202. Aspartate 228 is an NAD(+) binding site. Residue glutamate 233 is part of the active site. Histidine 250 acts as the Proton donor in catalysis. Glycine 253 provides a ligand contact to NAD(+). Residue tyrosine 254 participates in substrate binding.

The protein belongs to the D-isomer specific 2-hydroxyacid dehydrogenase family. PdxB subfamily. As to quaternary structure, homodimer.

It localises to the cytoplasm. It carries out the reaction 4-phospho-D-erythronate + NAD(+) = (R)-3-hydroxy-2-oxo-4-phosphooxybutanoate + NADH + H(+). Its pathway is cofactor biosynthesis; pyridoxine 5'-phosphate biosynthesis; pyridoxine 5'-phosphate from D-erythrose 4-phosphate: step 2/5. Its function is as follows. Catalyzes the oxidation of erythronate-4-phosphate to 3-hydroxy-2-oxo-4-phosphonooxybutanoate. In Teredinibacter turnerae (strain ATCC 39867 / T7901), this protein is Erythronate-4-phosphate dehydrogenase.